The primary structure comprises 618 residues: Probable Xaa-Pro aminopeptidase P (618 aa).

Mn(2+) is bound by residues aspartate 414, aspartate 425, glutamate 523, and glutamate 537.

This sequence belongs to the peptidase M24B family. Requires Mn(2+) as cofactor.

It catalyses the reaction Release of any N-terminal amino acid, including proline, that is linked to proline, even from a dipeptide or tripeptide.. In terms of biological role, catalyzes the removal of a penultimate prolyl residue from the N-termini of peptides. This is Probable Xaa-Pro aminopeptidase P (AMPP) from Metarhizium acridum (strain CQMa 102).